The sequence spans 153 residues: Large ribosomal subunit protein uL30 (153 aa).

It belongs to the universal ribosomal protein uL30 family. Part of the 50S ribosomal subunit.

The protein is Large ribosomal subunit protein uL30 of Methanocorpusculum labreanum (strain ATCC 43576 / DSM 4855 / Z).